A 299-amino-acid chain; its full sequence is Coenzyme PQQ synthesis protein B (299 aa).

The protein belongs to the PqqB family.

The protein operates within cofactor biosynthesis; pyrroloquinoline quinone biosynthesis. Functionally, may be involved in the transport of PQQ or its precursor to the periplasm. In Xanthomonas axonopodis pv. citri (strain 306), this protein is Coenzyme PQQ synthesis protein B.